The following is a 339-amino-acid chain: Cyclic AMP-dependent transcription factor ATF-4 (339 aa).

3 disordered regions span residues 14–62 (GPWP…PSEL), 153–182 (PEEI…HTEV), and 209–313 (QNIS…EKAD). Over residues 35–55 (VLEGSWSPSSSSLSSFSPPAS) the composition is skewed to low complexity. Pro residues predominate over residues 162 to 173 (SPAPSVPSPPEE). Over residues 211–226 (ISDCSDSDSGISVSGS) the composition is skewed to low complexity. Over residues 231–247 (SDLEPSSRAKPYSRPDP) the composition is skewed to basic and acidic residues. The 64-residue stretch at 266-329 (VEKKLKKMEQ…QYLRDLLEEM (64 aa)) folds into the bZIP domain. The segment at 268 to 288 (KKLKKMEQNKTAATRYRQKKR) is basic motif. A leucine-zipper region spans residues 294 to 322 (LNSECSELEKKNRELSEKADSLSREIQYL). Over residues 300-313 (ELEKKNRELSEKAD) the composition is skewed to basic and acidic residues.

Belongs to the bZIP family. As to quaternary structure, binds DNA as a homodimer and as a heterodimer.

It is found in the nucleus. In terms of biological role, transcription factor that binds the cAMP response element (CRE) (consensus: 5'-GTGACGT[AC][AG]-3') and displays two biological functions, as regulator of metabolic and redox processes under normal cellular conditions, and as master transcription factor during integrated stress response (ISR). Binds to asymmetric CRE's as a heterodimer and to palindromic CRE's as a homodimer. Core effector of the ISR, which is required for adaptation to various stress such as endoplasmic reticulum (ER) stress, amino acid starvation, mitochondrial stress or oxidative stress. During ISR, atf4 translation is induced via an alternative ribosome translation re-initiation mechanism in response to eif2s1/eIF-2-alpha phosphorylation, and stress-induced atf4 acts as a master transcription factor of stress-responsive genes in order to promote cell recovery. Promotes the transcription of genes linked to amino acid sufficiency and resistance to oxidative stress to protect cells against metabolic consequences of ER oxidation. In the absence of stress, atf4 translation is at low levels and it is required for normal metabolic processes such as embryonic lens formation, fetal liver hematopoiesis, bone development and synaptic plasticity. Acts as a regulator of osteoblast differentiation by promoting expression of osteoblast-specific genes. Regulates the circadian expression of the core clock components. Mainly acts as a transcriptional activator in cellular stress adaptation, but it can also act as a transcriptional repressor. The polypeptide is Cyclic AMP-dependent transcription factor ATF-4 (atf4) (Danio rerio (Zebrafish)).